The primary structure comprises 340 residues: Putative transport protein AF_1800 (340 aa).

7 consecutive transmembrane segments (helical) span residues 7 to 27, 57 to 77, 140 to 160, 193 to 213, 225 to 245, 260 to 280, and 290 to 310; these read LVLL…FTPL, SVIA…YGLI, TLLI…LADM, LWFG…PFFL, GLMF…ILPV, FLLI…RPYF, and LVLM…GFFI.

Belongs to the autoinducer-2 exporter (AI-2E) (TC 2.A.86) family.

Its subcellular location is the cell membrane. In Archaeoglobus fulgidus (strain ATCC 49558 / DSM 4304 / JCM 9628 / NBRC 100126 / VC-16), this protein is Putative transport protein AF_1800.